The following is a 486-amino-acid chain: Glutamyl-tRNA(Gln) amidotransferase subunit A (486 aa).

Residues Lys-79 and Ser-154 each act as charge relay system in the active site. Ser-178 functions as the Acyl-ester intermediate in the catalytic mechanism.

It belongs to the amidase family. GatA subfamily. Heterotrimer of A, B and C subunits.

The catalysed reaction is L-glutamyl-tRNA(Gln) + L-glutamine + ATP + H2O = L-glutaminyl-tRNA(Gln) + L-glutamate + ADP + phosphate + H(+). Its function is as follows. Allows the formation of correctly charged Gln-tRNA(Gln) through the transamidation of misacylated Glu-tRNA(Gln) in organisms which lack glutaminyl-tRNA synthetase. The reaction takes place in the presence of glutamine and ATP through an activated gamma-phospho-Glu-tRNA(Gln). This Dehalococcoides mccartyi (strain ATCC BAA-2266 / KCTC 15142 / 195) (Dehalococcoides ethenogenes (strain 195)) protein is Glutamyl-tRNA(Gln) amidotransferase subunit A.